The chain runs to 523 residues: Lysine-specific demethylase 4D (523 aa).

The region spanning Ile18–Arg60 is the JmjN domain. Residues Glu26 and Glu27 each carry the polyADP-ribosyl glutamic acid modification. Tyr136 lines the 2-oxoglutarate pocket. The 167-residue stretch at Asp146–Cys312 folds into the JmjC domain. Residues His192 and Glu194 each coordinate Fe cation. The 2-oxoglutarate site is built by Asn202 and Lys210. Zn(2+) is bound by residues Cys238 and His244. Residue Lys245 coordinates 2-oxoglutarate. His280 serves as a coordination point for Fe cation. 2 residues coordinate Zn(2+): Cys310 and Cys312. The disordered stretch occupies residues Arg407–Pro523. The segment covering Lys428–Ser440 has biased composition (low complexity). Basic residues predominate over residues Asn448–Gln458.

The protein belongs to the JHDM3 histone demethylase family. It depends on Fe(2+) as a cofactor. Ubiquitinated via 'Lys-63'-linked ubiquitin chains. Deubiquitinated by USP14 with the help of TRIM14 leading to stabilization.

The protein resides in the nucleus. It catalyses the reaction N(6),N(6),N(6)-trimethyl-L-lysyl(9)-[histone H3] + 2 2-oxoglutarate + 2 O2 = N(6)-methyl-L-lysyl(9)-[histone H3] + 2 formaldehyde + 2 succinate + 2 CO2. Histone demethylase that specifically demethylates 'Lys-9' of histone H3, thereby playing a central role in histone code. Does not demethylate histone H3 'Lys-4', H3 'Lys-27', H3 'Lys-36' nor H4 'Lys-20'. Demethylates both di- and trimethylated H3 'Lys-9' residue, while it has no activity on monomethylated residues. Demethylation of Lys residue generates formaldehyde and succinate. The polypeptide is Lysine-specific demethylase 4D (KDM4D) (Homo sapiens (Human)).